The following is a 687-amino-acid chain: Probable WRKY transcription factor 2 (687 aa).

Residues 197 to 276 form a disordered region; the sequence is YGNYNNRSSS…AGGAPAEDGY (80 aa). Composition is skewed to polar residues over residues 199-208 and 219-249; these read NYNNRSSSHQ and NIESSNLYGIETDNQNGQNKTSDVTTNTSLE. The WRKY 1 DNA-binding region spans 267–331; sequence AGGAPAEDGY…YKGAHNHLKP (65 aa). Residues cysteine 298, cysteine 303, histidine 326, and histidine 328 each coordinate Zn(2+). Disordered stretches follow at residues 324–384 and 416–453; these read GAHN…STRF and FSNDEDEDDRGTHGSVSLGYDGGGGGGGGEGDESESKR. The segment covering 354–379 has biased composition (polar residues); it reads RDSAATWVSCNNTQQQGGSNENNVEE. Positions 435–444 are enriched in gly residues; that stretch reads YDGGGGGGGG. Residues 481-546 constitute a DNA-binding region (WRKY 2); sequence SDVDILDDGY…YEGKHNHDVP (66 aa). Residues cysteine 512, cysteine 517, histidine 541, and histidine 543 each coordinate Zn(2+). The disordered stretch occupies residues 537-599; it reads YEGKHNHDVP…QVTTNNQSPF (63 aa). Positions 553 to 565 are enriched in gly residues; it reads HGGGGDSGNGNSG. Residues 578–589 are compositionally biased toward basic and acidic residues; it reads HHSEPPRGRFDR. Residues 590-599 show a composition bias toward polar residues; sequence QVTTNNQSPF.

It belongs to the WRKY group I family. Low expression in senescent leaves. Expressed in both the unfertilized egg cell and the pollen tube.

The protein resides in the nucleus. In terms of biological role, transcription factor. Regulates WOX8 and WOX9 expression and basal cell division patterns during early embryogenesis. Interacts specifically with the W box (5'-(T)TGAC[CT]-3'), a frequently occurring elicitor-responsive cis-acting element. Required to repolarize the zygote from a transient symmetric state. The chain is Probable WRKY transcription factor 2 from Arabidopsis thaliana (Mouse-ear cress).